Here is a 184-residue protein sequence, read N- to C-terminus: ATP-dependent protease subunit HslV (184 aa).

T12 is a catalytic residue. A166, C169, and T172 together coordinate Na(+).

It belongs to the peptidase T1B family. HslV subfamily. In terms of assembly, a double ring-shaped homohexamer of HslV is capped on each side by a ring-shaped HslU homohexamer. The assembly of the HslU/HslV complex is dependent on binding of ATP.

Its subcellular location is the cytoplasm. The catalysed reaction is ATP-dependent cleavage of peptide bonds with broad specificity.. Its activity is regulated as follows. Allosterically activated by HslU binding. Its function is as follows. Protease subunit of a proteasome-like degradation complex believed to be a general protein degrading machinery. This Nitrobacter winogradskyi (strain ATCC 25391 / DSM 10237 / CIP 104748 / NCIMB 11846 / Nb-255) protein is ATP-dependent protease subunit HslV.